Here is a 789-residue protein sequence, read N- to C-terminus: Phenylalanine--tRNA ligase beta subunit (789 aa).

One can recognise a tRNA-binding domain in the interval 38 to 151; the sequence is KKHLQSFVVV…NTYNVGESFF (114 aa). In terms of domain architecture, B5 spans 398–474; sequence HNDILLNFSP…RLYGYDKILE (77 aa). Asp-452, Asp-458, Glu-461, and Glu-462 together coordinate Mg(2+). The 94-residue stretch at 694-787 folds into the FDX-ACB domain; it reads LRYQSVKRDF…ISKGFNGILR (94 aa).

It belongs to the phenylalanyl-tRNA synthetase beta subunit family. Type 1 subfamily. As to quaternary structure, tetramer of two alpha and two beta subunits. Mg(2+) is required as a cofactor.

The protein localises to the cytoplasm. The enzyme catalyses tRNA(Phe) + L-phenylalanine + ATP = L-phenylalanyl-tRNA(Phe) + AMP + diphosphate + H(+). In Ehrlichia ruminantium (strain Gardel), this protein is Phenylalanine--tRNA ligase beta subunit.